The primary structure comprises 104 residues: MRGGDVFASVVLMLLLALPRPGVSLARRKCCLNPTNRPIPNPLLQDLSRVDYQAIGHDCGREAFRVTLQDGRQGCVSVGNKSLLDWLRGHKDLCPQIWSGCESL.

As to quaternary structure, interacts with host CXCL12.

Functionally, plays a role in antagonizing the chemotaxis of multiple leukocyte subsets induced by CC and CXC chemokines. Displaces the interaction between CXCL12 and CXCR4 and thereby inactivates the antiviral activity of host CXCL12. This Homo sapiens (Human) protein is Chemokine-like protein MC148 (MC148).